A 118-amino-acid chain; its full sequence is Endoribonuclease MazF9 (118 aa).

Belongs to the PemK/MazF family. As to quaternary structure, forms a complex with cognate antitoxin MazE9.

In terms of biological role, toxic component of a type II toxin-antitoxin (TA) system. Upon expression in E.coli and M.smegmatis inhibits cell growth and colony formation. Its toxic effect is neutralized by coexpression with cognate antitoxin MazE9. Acts as an mRNA interferase, specifically cleaving between U and C in UAC sequences. May cleave its cognate antitoxin's gene. In E.coli expression with non-cognate antitoxins VapB27 and VapB40 partially neutralizes the toxin. The protein is Endoribonuclease MazF9 (mazF9) of Mycobacterium tuberculosis (strain ATCC 25618 / H37Rv).